The sequence spans 908 residues: Bifunctional uridylyltransferase/uridylyl-removing enzyme (908 aa).

A uridylyltransferase region spans residues M1–R360. Positions I361–T718 are uridylyl-removing. Positions V477 to L599 constitute an HD domain. 2 ACT domains span residues R719 to R801 and I829 to R904.

Belongs to the GlnD family. It depends on Mg(2+) as a cofactor.

The catalysed reaction is [protein-PII]-L-tyrosine + UTP = [protein-PII]-uridylyl-L-tyrosine + diphosphate. The enzyme catalyses [protein-PII]-uridylyl-L-tyrosine + H2O = [protein-PII]-L-tyrosine + UMP + H(+). With respect to regulation, uridylyltransferase (UTase) activity is inhibited by glutamine, while glutamine activates uridylyl-removing (UR) activity. Its function is as follows. Modifies, by uridylylation and deuridylylation, the PII regulatory proteins (GlnB and homologs), in response to the nitrogen status of the cell that GlnD senses through the glutamine level. Under low glutamine levels, catalyzes the conversion of the PII proteins and UTP to PII-UMP and PPi, while under higher glutamine levels, GlnD hydrolyzes PII-UMP to PII and UMP (deuridylylation). Thus, controls uridylylation state and activity of the PII proteins, and plays an important role in the regulation of nitrogen assimilation and metabolism. The chain is Bifunctional uridylyltransferase/uridylyl-removing enzyme from Ruegeria pomeroyi (strain ATCC 700808 / DSM 15171 / DSS-3) (Silicibacter pomeroyi).